The primary structure comprises 306 residues: Palmitoyl-protein thioesterase 1 (306 aa).

A signal peptide spans 1 to 27 (MASPGCLWLLAVALLPWTCASRALQHL). Cysteine 6 is lipidated: S-palmitoyl cysteine; by ZDHHC3 and ZDHHC7. 3 cysteine pairs are disulfide-bonded: cysteine 45–cysteine 46, cysteine 96–cysteine 128, and cysteine 152–cysteine 160. Residue serine 115 is part of the active site. 3 N-linked (GlcNAc...) asparagine glycosylation sites follow: asparagine 197, asparagine 212, and asparagine 232. Active-site residues include aspartate 233 and histidine 289.

Belongs to the palmitoyl-protein thioesterase family. In terms of assembly, interacts with CLN5. Interacts with ATP5F1A and ATP5F1B. In terms of processing, glycosylated.

The protein resides in the lysosome. Its subcellular location is the secreted. The protein localises to the golgi apparatus. It is found in the endoplasmic reticulum. The enzyme catalyses S-hexadecanoyl-L-cysteinyl-[protein] + H2O = L-cysteinyl-[protein] + hexadecanoate + H(+). The catalysed reaction is hexadecanoyl-CoA + H2O = hexadecanoate + CoA + H(+). It catalyses the reaction S-hexadecanoyl-N-acetylcysteamine + H2O = N-acetylcysteamine + hexadecanoate + H(+). It carries out the reaction S-hexadecanoyl-N-acetylcysteine methyl ester + H2O = N-acetylcysteine methyl ester + hexadecanoate + H(+). With respect to regulation, palmitoylation reduces PPT1 enzymatic activity. In terms of biological role, has thioesterase activity against fatty acid thioesters with 14 -18 carbons, including palmitoyl-CoA, S-palmitoyl-N-acetylcysteamine, and palmitoylated proteins. In contrast to PPT2, PPT1 can hydrolyze palmitoylated proteins and palmitoylcysteine. This Homo sapiens (Human) protein is Palmitoyl-protein thioesterase 1 (PPT1).